A 320-amino-acid chain; its full sequence is Ferrochelatase (320 aa).

Fe cation is bound by residues H194 and E275.

Belongs to the ferrochelatase family. In terms of assembly, monomer.

It localises to the cytoplasm. It catalyses the reaction heme b + 2 H(+) = protoporphyrin IX + Fe(2+). It functions in the pathway porphyrin-containing compound metabolism; protoheme biosynthesis; protoheme from protoporphyrin-IX: step 1/1. Functionally, catalyzes the ferrous insertion into protoporphyrin IX. This is Ferrochelatase from Salmonella dublin (strain CT_02021853).